The following is a 732-amino-acid chain: Elongation factor 2 (732 aa).

One can recognise a tr-type G domain in the interval 19–260 (ERIRNIDIAA…MVIKNLPNPR (242 aa)). Residues 28–35 (AHIDHGKT), 94–98 (DTPGH), and 148–151 (NKVD) each bind GTP. A Diphthamide modification is found at H598.

It belongs to the TRAFAC class translation factor GTPase superfamily. Classic translation factor GTPase family. EF-G/EF-2 subfamily.

It localises to the cytoplasm. In terms of biological role, catalyzes the GTP-dependent ribosomal translocation step during translation elongation. During this step, the ribosome changes from the pre-translocational (PRE) to the post-translocational (POST) state as the newly formed A-site-bound peptidyl-tRNA and P-site-bound deacylated tRNA move to the P and E sites, respectively. Catalyzes the coordinated movement of the two tRNA molecules, the mRNA and conformational changes in the ribosome. The protein is Elongation factor 2 of Picrophilus torridus (strain ATCC 700027 / DSM 9790 / JCM 10055 / NBRC 100828 / KAW 2/3).